Reading from the N-terminus, the 1250-residue chain is Protein suppressor of variegation 3-7 (1250 aa).

Disordered regions lie at residues 107–148 and 160–186; these read LNNP…HSYH and HDPG…GGMR. Residues 132–141 show a composition bias toward polar residues; it reads STKTEPSSDA. Positions 164–175 are enriched in acidic residues; sequence DSQDDDDEDDES. Phosphoserine is present on residues Ser-165, Ser-175, and Ser-176. 4 consecutive C2H2-type zinc fingers follow at residues 217–236, 319–343, 425–446, and 487–512; these read CLYC…IQQH, CRIC…TKGH, CTLC…TRAH, and CSVC…SEKH. Basic and acidic residues predominate over residues 343 to 354; it reads HMEALRNLDSDK. The segment at 343-398 is disordered; it reads HMEALRNLDSDKRSRKRKRSKSNSVTNSGGDEAEREKESEPEVGPEDAQDTPVVMM. The segment at 525–564 is disordered; sequence VGSADGRGGDNMDEEEAAASDQAQSSQTDDSEDNDDDNWS. A compositionally biased stretch (low complexity) spans 543-552; it reads ASDQAQSSQT. Over residues 553–563 the composition is skewed to acidic residues; sequence DDSEDNDDDNW. The C2H2-type 5 zinc-finger motif lies at 605–629; the sequence is QICKFCRVRFHNEAAKARHELSARH. The tract at residues 642–684 is disordered; it reads KLHQGTNTQTKHNAQDDEESQEQDEEYGEEEEDAEEDSQSNFD. Over residues 657 to 679 the composition is skewed to acidic residues; sequence DDEESQEQDEEYGEEEEDAEEDS. C2H2-type zinc fingers lie at residues 737–761 and 829–852; these read CKLC…TSRH and CRVC…SRKH. Residues 851 to 860 are compositionally biased toward basic and acidic residues; that stretch reads KHVENKERQR. Residues 851-915 are disordered; sequence KHVENKERQR…PLAKRSRRSM (65 aa). A phosphoserine mark is found at Ser-871 and Ser-873. Residues 879-897 show a composition bias toward basic and acidic residues; the sequence is DAERQESGMDKESENDMSV. Ser-975 bears the Phosphoserine mark. The BESS domain occupies 987–1026; sequence RHVMDLFFDSISPTMKSLPPDLAAEGKSKIMQLVCSLELR. The span at 1032–1055 shows a compositional bias: low complexity; sequence ATTPTPATVSASSKWPSSTTVTPV. 4 disordered regions span residues 1032–1060, 1079–1116, 1154–1180, and 1205–1236; these read ATTP…TPPA, TTPH…NGSA, QSRT…ADLS, and NTPQ…NGCQ. Composition is skewed to polar residues over residues 1079-1091 and 1104-1114; these read TTPH…QNNN and GASSAQVTING. The segment covering 1206–1224 has biased composition (low complexity); the sequence is TPQMQQPQQAQASITSSTP.

As to quaternary structure, interacts with Su(var)39 through the BESS domain.

The protein resides in the nucleus. Functionally, dose-limiting factor in position-effect variegation, the inactivation in some cells of a gene translocated next to heterochromatin. It could play a role in chromosome condensation. This Drosophila melanogaster (Fruit fly) protein is Protein suppressor of variegation 3-7 (Su(var)3-7).